The chain runs to 161 residues: Long arms of the bivalent protein 1 (161 aa).

The PP1 binding motif signature appears at 72–75 (KVIW). Residues 85-161 (GTMFEDFKED…SDKTMCSGQS (77 aa)) are disordered. Residues 97 to 115 (QESVSSISNNEANWGSSVN) show a composition bias toward polar residues. The segment covering 120–129 (NYEKMQKEET) has biased composition (basic and acidic residues). The span at 130 to 151 (FDPYDSDSDTSEDSDFDEDFED) shows a compositional bias: acidic residues.

As to quaternary structure, interacts with gsp-1 and gsp-2; the interaction is direct.

It localises to the chromosome. The protein localises to the nucleus. In terms of biological role, involved in sister chromatid cohesion during mitosis and meiosis. In association with the gsp-2 phosphatase, it both restricts the localization and antagonizes the function of the air-2 kinase during meiosis I and mitosis to promote chromatid cohesion and spindle attachment. This in turn, drives germ cell immortality. Furthermore, may play a role in ensuring the timely assembly of the synaptonemal complex during prophase I of meiosis. The polypeptide is Long arms of the bivalent protein 1 (Caenorhabditis elegans).